Here is a 712-residue protein sequence, read N- to C-terminus: Phosphoribosylformylglycinamidine synthase subunit PurL (712 aa).

The active site involves H32. Y35 lines the ATP pocket. Mg(2+) is bound at residue E76. Residues 77–80 and R99 contribute to the substrate site; that span reads SHNH. The active-site Proton acceptor is H78. D100 is a Mg(2+) binding site. Q223 lines the substrate pocket. D251 lines the Mg(2+) pocket. A substrate-binding site is contributed by 295–297; that stretch reads ESQ. Residues D470 and G507 each coordinate ATP. Residue N508 coordinates Mg(2+). S510 is a substrate binding site.

It belongs to the FGAMS family. In terms of assembly, monomer. Part of the FGAM synthase complex composed of 1 PurL, 1 PurQ and 2 PurS subunits.

It localises to the cytoplasm. It catalyses the reaction N(2)-formyl-N(1)-(5-phospho-beta-D-ribosyl)glycinamide + L-glutamine + ATP + H2O = 2-formamido-N(1)-(5-O-phospho-beta-D-ribosyl)acetamidine + L-glutamate + ADP + phosphate + H(+). Its pathway is purine metabolism; IMP biosynthesis via de novo pathway; 5-amino-1-(5-phospho-D-ribosyl)imidazole from N(2)-formyl-N(1)-(5-phospho-D-ribosyl)glycinamide: step 1/2. Part of the phosphoribosylformylglycinamidine synthase complex involved in the purines biosynthetic pathway. Catalyzes the ATP-dependent conversion of formylglycinamide ribonucleotide (FGAR) and glutamine to yield formylglycinamidine ribonucleotide (FGAM) and glutamate. The FGAM synthase complex is composed of three subunits. PurQ produces an ammonia molecule by converting glutamine to glutamate. PurL transfers the ammonia molecule to FGAR to form FGAM in an ATP-dependent manner. PurS interacts with PurQ and PurL and is thought to assist in the transfer of the ammonia molecule from PurQ to PurL. In Thermococcus gammatolerans (strain DSM 15229 / JCM 11827 / EJ3), this protein is Phosphoribosylformylglycinamidine synthase subunit PurL.